Here is a 360-residue protein sequence, read N- to C-terminus: Probable dual-specificity RNA methyltransferase RlmN (360 aa).

The Proton acceptor role is filled by E91. One can recognise a Radical SAM core domain in the interval 97-335 (QHYGQSVCVT…CVVRQEHGTD (239 aa)). The cysteines at positions 104 and 340 are disulfide-linked. C111, C115, and C118 together coordinate [4Fe-4S] cluster. S-adenosyl-L-methionine-binding positions include 163-164 (GE), S195, 218-220 (SLH), and N296. The S-methylcysteine intermediate role is filled by C340.

The protein belongs to the radical SAM superfamily. RlmN family. Requires [4Fe-4S] cluster as cofactor.

Its subcellular location is the cytoplasm. It catalyses the reaction adenosine(2503) in 23S rRNA + 2 reduced [2Fe-2S]-[ferredoxin] + 2 S-adenosyl-L-methionine = 2-methyladenosine(2503) in 23S rRNA + 5'-deoxyadenosine + L-methionine + 2 oxidized [2Fe-2S]-[ferredoxin] + S-adenosyl-L-homocysteine. It carries out the reaction adenosine(37) in tRNA + 2 reduced [2Fe-2S]-[ferredoxin] + 2 S-adenosyl-L-methionine = 2-methyladenosine(37) in tRNA + 5'-deoxyadenosine + L-methionine + 2 oxidized [2Fe-2S]-[ferredoxin] + S-adenosyl-L-homocysteine. Its function is as follows. Specifically methylates position 2 of adenine 2503 in 23S rRNA and position 2 of adenine 37 in tRNAs. In Streptococcus equi subsp. zooepidemicus (strain H70), this protein is Probable dual-specificity RNA methyltransferase RlmN.